Reading from the N-terminus, the 182-residue chain is Succinate dehydrogenase cytochrome b560 subunit, mitochondrial (182 aa).

The helical transmembrane segment at 65–94 threads the bilayer; sequence LTWMLSGFHRISGCVMAGTLLVGGIGFAVL. At 95–114 the chain is on the mitochondrial intermembrane side; that stretch reads PFDFTAFVDFIRSWNLPCAV. A helical membrane pass occupies residues 115-139; it reads TAVFKYIIAFPIIFHTLNGIRFLGF. His-129 is a heme binding site. Residues 140-147 are Mitochondrial matrix-facing; the sequence is DLAKGVNN. A helical membrane pass occupies residues 148 to 169; sequence VGQIYKSGYLVSGLSAILALAI. The Mitochondrial intermembrane portion of the chain corresponds to 170–172; the sequence is VFN.

It belongs to the cytochrome b560 family. As to quaternary structure, component of complex II composed of four subunits: a flavoprotein (FP), iron-sulfur protein (IP), and a cytochrome b560 composed of two integral membrane proteins. It depends on heme as a cofactor.

The protein localises to the mitochondrion inner membrane. It participates in carbohydrate metabolism; tricarboxylic acid cycle. Its function is as follows. Membrane-anchoring subunit of succinate dehydrogenase (SDH) that is involved in complex II of the mitochondrial electron transport chain and is responsible for transferring electrons from succinate to ubiquinone (coenzyme Q). Mediates resistance to enteropathogenic E.coli infection. The polypeptide is Succinate dehydrogenase cytochrome b560 subunit, mitochondrial (mev-1) (Caenorhabditis elegans).